The chain runs to 230 residues: Demethylmenaquinone methyltransferase (230 aa).

S-adenosyl-L-methionine-binding positions include Thr62, Asp80, Asp100–Gly101, and Ser117.

It belongs to the class I-like SAM-binding methyltransferase superfamily. MenG/UbiE family.

The enzyme catalyses a 2-demethylmenaquinol + S-adenosyl-L-methionine = a menaquinol + S-adenosyl-L-homocysteine + H(+). Its pathway is quinol/quinone metabolism; menaquinone biosynthesis; menaquinol from 1,4-dihydroxy-2-naphthoate: step 2/2. Its function is as follows. Methyltransferase required for the conversion of demethylmenaquinol (DMKH2) to menaquinol (MKH2). In Corynebacterium urealyticum (strain ATCC 43042 / DSM 7109), this protein is Demethylmenaquinone methyltransferase.